The chain runs to 381 residues: Cobalt-precorrin-5B C(1)-methyltransferase (381 aa).

The protein belongs to the CbiD family.

It carries out the reaction Co-precorrin-5B + S-adenosyl-L-methionine = Co-precorrin-6A + S-adenosyl-L-homocysteine. Its pathway is cofactor biosynthesis; adenosylcobalamin biosynthesis; cob(II)yrinate a,c-diamide from sirohydrochlorin (anaerobic route): step 6/10. Catalyzes the methylation of C-1 in cobalt-precorrin-5B to form cobalt-precorrin-6A. In Clostridium botulinum (strain Eklund 17B / Type B), this protein is Cobalt-precorrin-5B C(1)-methyltransferase.